The primary structure comprises 149 residues: D-aminoacyl-tRNA deacylase (149 aa).

Positions 137-138 (GP) match the Gly-cisPro motif, important for rejection of L-amino acids motif.

It belongs to the DTD family. As to quaternary structure, homodimer.

It localises to the cytoplasm. The enzyme catalyses glycyl-tRNA(Ala) + H2O = tRNA(Ala) + glycine + H(+). It carries out the reaction a D-aminoacyl-tRNA + H2O = a tRNA + a D-alpha-amino acid + H(+). Functionally, an aminoacyl-tRNA editing enzyme that deacylates mischarged D-aminoacyl-tRNAs. Also deacylates mischarged glycyl-tRNA(Ala), protecting cells against glycine mischarging by AlaRS. Acts via tRNA-based rather than protein-based catalysis; rejects L-amino acids rather than detecting D-amino acids in the active site. By recycling D-aminoacyl-tRNA to D-amino acids and free tRNA molecules, this enzyme counteracts the toxicity associated with the formation of D-aminoacyl-tRNA entities in vivo and helps enforce protein L-homochirality. In Clostridium acetobutylicum (strain ATCC 824 / DSM 792 / JCM 1419 / IAM 19013 / LMG 5710 / NBRC 13948 / NRRL B-527 / VKM B-1787 / 2291 / W), this protein is D-aminoacyl-tRNA deacylase.